The chain runs to 178 residues: MQLVNTRYAEALIDVTEEKNSTDKVLNNLVQVLKLLEENREFYSFLLDPQIQKESRKEAIIKVFEGRIEQEVVNFLMLLVDKERFENIRGIVEEYFRLADERKNILNMTIISAFPLEDVQINRIKEKYKKLYNKTDVKAKLIIDKSLIGGVKIQIGDKVIDDSIKGRLLCLKEALLQR.

Belongs to the ATPase delta chain family. F-type ATPases have 2 components, F(1) - the catalytic core - and F(0) - the membrane proton channel. F(1) has five subunits: alpha(3), beta(3), gamma(1), delta(1), epsilon(1). F(0) has three main subunits: a(1), b(2) and c(10-14). The alpha and beta chains form an alternating ring which encloses part of the gamma chain. F(1) is attached to F(0) by a central stalk formed by the gamma and epsilon chains, while a peripheral stalk is formed by the delta and b chains.

Its subcellular location is the cell membrane. Functionally, f(1)F(0) ATP synthase produces ATP from ADP in the presence of a proton or sodium gradient. F-type ATPases consist of two structural domains, F(1) containing the extramembraneous catalytic core and F(0) containing the membrane proton channel, linked together by a central stalk and a peripheral stalk. During catalysis, ATP synthesis in the catalytic domain of F(1) is coupled via a rotary mechanism of the central stalk subunits to proton translocation. In terms of biological role, this protein is part of the stalk that links CF(0) to CF(1). It either transmits conformational changes from CF(0) to CF(1) or is implicated in proton conduction. This chain is ATP synthase subunit delta, found in Acetivibrio thermocellus (strain ATCC 27405 / DSM 1237 / JCM 9322 / NBRC 103400 / NCIMB 10682 / NRRL B-4536 / VPI 7372) (Clostridium thermocellum).